The following is a 432-amino-acid chain: Ciliated left-right organizer protein containing ZP-N domains homolog (432 aa).

Expressed specifically by cells of the ciliated left-right organizer.

This is Ciliated left-right organizer protein containing ZP-N domains homolog (ciroz) from Danio rerio (Zebrafish).